The following is a 385-amino-acid chain: Protein pelota homolog (385 aa).

A Glycyl lysine isopeptide (Lys-Gly) (interchain with G-Cter in SUMO2) cross-link involves residue lysine 162. 4 positions are modified to phosphoserine: serine 374, serine 380, serine 381, and serine 382.

This sequence belongs to the eukaryotic release factor 1 family. Pelota subfamily. In terms of assembly, component of the Pelota-HBS1L complex, also named Dom34-Hbs1 complex, composed of PELO and HBS1L. Interacts with PINK1. Interacts with ABCE1. Interacts with CNOT4. It depends on a divalent metal cation as a cofactor.

It is found in the cytoplasm. In terms of biological role, component of the Pelota-HBS1L complex, a complex that recognizes stalled ribosomes and triggers the No-Go Decay (NGD) pathway. In the Pelota-HBS1L complex, PELO recognizes ribosomes stalled at the 3' end of an mRNA and engages stalled ribosomes by destabilizing mRNA in the mRNA channel. Following mRNA extraction from stalled ribosomes by the SKI complex, the Pelota-HBS1L complex promotes recruitment of ABCE1, which drives the disassembly of stalled ribosomes, followed by degradation of damaged mRNAs as part of the NGD pathway. As part of the PINK1-regulated signaling, upon mitochondrial damage is recruited to the ribosome/mRNA-ribonucleoprotein complex associated to mitochondrial outer membrane thereby enabling the recruitment of autophagy receptors and induction of mitophagy. This chain is Protein pelota homolog (PELO), found in Pongo abelii (Sumatran orangutan).